A 194-amino-acid chain; its full sequence is uncharacterized protein (194 aa).

The interval 25–156 (PSWACRRGGP…ESPLGTLPCS (132 aa)) is disordered. The segment covering 43-57 (GPSTVPVTPTAGSCQ) has biased composition (polar residues). Positions 104–113 (SSSPGPSFHL) are enriched in low complexity.

This is an uncharacterized protein from Homo sapiens (Human).